We begin with the raw amino-acid sequence, 808 residues long: Protein NLP5 (808 aa).

Positions 56 to 68 (PTQDTSNSLSQMY) are enriched in polar residues. The disordered stretch occupies residues 56–83 (PTQDTSNSLSQMYGQDCPERSSLEDQNQ). Residues 536–617 (NRVTEKKRTK…IDSVEGVSGH (82 aa)) form the RWP-RK domain. A disordered region spans residues 660–680 (SPGSSCSHSSSCSSETQVIKE). Low complexity predominate over residues 663–673 (SSCSHSSSCSS). Residues 710 to 793 (FLRVKVSYEE…QTIKLLLQLS (84 aa)) form the PB1 domain.

It localises to the nucleus. Its function is as follows. Probable transcription factor. The sequence is that of Protein NLP5 (NLP5) from Arabidopsis thaliana (Mouse-ear cress).